The following is a 1988-amino-acid chain: Protein Ycf2 (1988 aa).

Gly-1337–Ser-1344 lines the ATP pocket. The segment at Ser-1377–Ile-1396 is disordered.

It belongs to the Ycf2 family.

It is found in the plastid. It localises to the chloroplast stroma. Functionally, probable ATPase of unknown function. Its presence in a non-photosynthetic plant (Epifagus virginiana) and experiments in tobacco indicate that it has an essential function which is probably not related to photosynthesis. In Cucumis sativus (Cucumber), this protein is Protein Ycf2.